Here is a 509-residue protein sequence, read N- to C-terminus: Hyaluronidase PH-20 (509 aa).

A signal peptide spans 1 to 35 (MGVLKFKHIFFRSFVKSSGVSQIVFTFLLIPCCLT). Disulfide bonds link cysteine 60/cysteine 351 and cysteine 224/cysteine 238. Asparagine 82 carries an N-linked (GlcNAc...) asparagine glycan. Glutamate 148 serves as the catalytic Proton donor. Residues asparagine 166, asparagine 235, asparagine 254, and asparagine 368 are each glycosylated (N-linked (GlcNAc...) asparagine). 3 cysteine pairs are disulfide-bonded: cysteine 376–cysteine 387, cysteine 381–cysteine 435, and cysteine 437–cysteine 464. N-linked (GlcNAc...) asparagine glycosylation is present at asparagine 393. Serine 490 carries GPI-anchor amidated serine lipidation. The propeptide at 491-509 (ATMFIVSILFLIISSVASL) is removed in mature form.

It belongs to the glycosyl hydrolase 56 family. Post-translationally, N-glycosylated. As to expression, testis.

The protein resides in the cell membrane. The enzyme catalyses Random hydrolysis of (1-&gt;4)-linkages between N-acetyl-beta-D-glucosamine and D-glucuronate residues in hyaluronate.. In terms of biological role, involved in sperm-egg adhesion. Upon fertilization sperm must first penetrate a layer of cumulus cells that surrounds the egg before reaching the zona pellucida. The cumulus cells are embedded in a matrix containing hyaluronic acid which is formed prior to ovulation. This protein aids in penetrating the layer of cumulus cells by digesting hyaluronic acid. In Homo sapiens (Human), this protein is Hyaluronidase PH-20 (SPAM1).